The primary structure comprises 121 residues: Chorion class A proteins Ld9 (121 aa).

It belongs to the chorion protein family.

In terms of biological role, this protein is one of many from the eggshell of the gypsy moth. The polypeptide is Chorion class A proteins Ld9 (Lymantria dispar (Gypsy moth)).